We begin with the raw amino-acid sequence, 150 residues long: MKVIFLADVKGKGKKGEIKEVPTGYAQNFLIKKNLAKEATSQSIGELKGKQKAEEKAQAEILAEAQAVKAVLDEDKTRVQFQEKVGPDGRTFGSITAKKISEELQKQFGVKVDKRHIVLDHPIRAIGLFEVPVKLHKELTAEIKLAITEA.

It belongs to the bacterial ribosomal protein bL9 family.

Its function is as follows. Binds to the 23S rRNA. In Streptococcus pyogenes serotype M5 (strain Manfredo), this protein is Large ribosomal subunit protein bL9.